Here is a 1612-residue protein sequence, read N- to C-terminus: DNA (cytosine-5)-methyltransferase PliMCI (1612 aa).

Positions 7–101 constitute a DMAP1-binding domain; that stretch reads CDQVIPPNVR…NGDTKEEASS (95 aa). Residues 87-338 form a disordered region; it reads TCSPVNGDTK…TAESKQPPLR (252 aa). Basic and acidic residues predominate over residues 94–110; sequence DTKEEASSNGKDDEKAE. Positions 115–131 are enriched in low complexity; it reads NGTTSNGSTTNGSSGSS. A compositionally biased stretch (polar residues) spans 132-142; sequence KANGHTNGGYV. Residues 143 to 154 are compositionally biased toward low complexity; the sequence is QSSSQEETGTSQ. Composition is skewed to basic and acidic residues over residues 193–212, 222–232, and 260–289; these read VLGD…KKDV, EESATPDEKTL, and KKEE…KKEE. The segment at 626–672 adopts a CXXC-type zinc-finger fold; that stretch reads ASERKKRCGVCEICQAPDCGKCTACKDMIKFGGSGKAKQACKDRRCP. Zn(2+)-binding residues include Cys633, Cys636, Cys639, Cys644, Cys647, Cys650, Cys666, and Cys671. Positions 677-708 are disordered; it reads QEADENDIDEMDNSSNKENKDEKKAKKGRKLE. The span at 678–688 shows a compositional bias: acidic residues; sequence EADENDIDEMD. Positions 691-708 are enriched in basic and acidic residues; sequence SNKENKDEKKAKKGRKLE. 2 consecutive BAH domains span residues 743–871 and 967–1089; these read EKIE…EDYE and NYRK…EDPP. The interval 1084–1121 is disordered; it reads CFEDPPSKSRSTRMKGKGKGKGKGKAKGKIAVEKEEEK. Over residues 1093 to 1111 the composition is skewed to basic residues; it reads RSTRMKGKGKGKGKGKAKG. Positions 1131–1590 constitute an SAM-dependent MTase C5-type domain; the sequence is LKCLDVFAGC…MEIKVCLQTK (460 aa). S-adenosyl-L-methionine is bound by residues 1142 to 1143, 1160 to 1161, 1182 to 1183, and Cys1183; these read GL, EK, and DC. The active site involves Cys1218. Asn1569 and Val1571 together coordinate S-adenosyl-L-methionine.

This sequence belongs to the class I-like SAM-binding methyltransferase superfamily. C5-methyltransferase family.

Its subcellular location is the nucleus. It carries out the reaction a 2'-deoxycytidine in DNA + S-adenosyl-L-methionine = a 5-methyl-2'-deoxycytidine in DNA + S-adenosyl-L-homocysteine + H(+). Methylates CpG residues. In Paracentrotus lividus (Common sea urchin), this protein is DNA (cytosine-5)-methyltransferase PliMCI (DNMT).